The chain runs to 161 residues: Prs ADP-ribosylating toxin (161 aa).

This sequence belongs to the MbcT/ParT/Res family. In terms of assembly, homodimer, forms heterotetrameric ParS(2)-ParT(2) complexes. In terms of processing, consumes NAD(+) and auto-ADP-ribosylates on the tryptic fragment Ala-47-Arg-66 in vitro. Also auto-ADP-ribosylates using NADP(+).

Toxic component of a type II toxin-antitoxin (TA) system. Expression in E.coli inhibits cell growth; bacteriostasis is neutralized by expression of cognate antitoxin ParS. ADP-ribosylates E.coli ribose-phosphate pyrophosphokinase (RPPK, prs) using NAD(+) in vitro; ADP-ribosylates RPPK on 'Lys-182' and 'Ser-202'. Cannot use NADP(+). Also auto-ADP-ribosylates in vitro; in the presence of RPPK auto-ADP-ribosylation decreases. This is Prs ADP-ribosylating toxin from Sphingobium sp. (strain YBL2).